The following is a 310-amino-acid chain: Homoserine kinase (310 aa).

An ATP-binding site is contributed by 91 to 101 (PIGSGLGSSAC).

Belongs to the GHMP kinase family. Homoserine kinase subfamily.

Its subcellular location is the cytoplasm. It catalyses the reaction L-homoserine + ATP = O-phospho-L-homoserine + ADP + H(+). The protein operates within amino-acid biosynthesis; L-threonine biosynthesis; L-threonine from L-aspartate: step 4/5. Catalyzes the ATP-dependent phosphorylation of L-homoserine to L-homoserine phosphate. The polypeptide is Homoserine kinase (Escherichia coli O81 (strain ED1a)).